A 344-amino-acid chain; its full sequence is Beta-hexosaminidase (344 aa).

Substrate contacts are provided by residues Asp-60, Arg-68, Arg-132, and 162–163 (KH). His-175 functions as the Proton donor/acceptor in the catalytic mechanism. Catalysis depends on Asp-247, which acts as the Nucleophile.

The protein belongs to the glycosyl hydrolase 3 family. NagZ subfamily.

The protein localises to the cytoplasm. It carries out the reaction Hydrolysis of terminal non-reducing N-acetyl-D-hexosamine residues in N-acetyl-beta-D-hexosaminides.. It participates in cell wall biogenesis; peptidoglycan recycling. Functionally, plays a role in peptidoglycan recycling by cleaving the terminal beta-1,4-linked N-acetylglucosamine (GlcNAc) from peptide-linked peptidoglycan fragments, giving rise to free GlcNAc, anhydro-N-acetylmuramic acid and anhydro-N-acetylmuramic acid-linked peptides. This is Beta-hexosaminidase from Haemophilus ducreyi (strain 35000HP / ATCC 700724).